The following is a 537-amino-acid chain: ESX-2 secretion system protein EccE2 (537 aa).

The chain crosses the membrane as a helical span at residues 31–51 (ALGGQLGAVMAVVVGVALVFV).

The protein belongs to the EccE family. As to quaternary structure, could be part of the ESX-2 / type VII secretion system (T7SS), which is composed of cytosolic and membrane components.

It is found in the cell membrane. The polypeptide is ESX-2 secretion system protein EccE2 (eccE2) (Mycobacterium tuberculosis (strain CDC 1551 / Oshkosh)).